Reading from the N-terminus, the 105-residue chain is MGALAELAGDEKNGEGSRTFVFTNEGHTLGNALKTIIARYPEVDFCGYTIPHPTEQKLHFRIQSRRDRAIDILKRGLEDLEGLCDHTIVTFEKEMAEFNAMKVEN.

It belongs to the archaeal Rpo11/eukaryotic RPB11/RPC19 RNA polymerase subunit family. As to quaternary structure, component of the RNA polymerase I (Pol I) and RNA polymerase III (Pol III) complexes consisting of at least 13 and 17 subunits, respectively.

Its subcellular location is the nucleus. DNA-dependent RNA polymerase catalyzes the transcription of DNA into RNA using the four ribonucleoside triphosphates as substrates. Common core component of RNA polymerases I and III which synthesize ribosomal RNA precursors and small RNAs, such as 5S rRNA and tRNAs, respectively. The polypeptide is DNA-directed RNA polymerases I and III subunit RPAC2 (Drosophila melanogaster (Fruit fly)).